The chain runs to 261 residues: 5'-nucleotidase SurE (261 aa).

Residues Asp8, Asp9, Ser43, and Asn96 each contribute to the a divalent metal cation site.

This sequence belongs to the SurE nucleotidase family. It depends on a divalent metal cation as a cofactor.

Its subcellular location is the cytoplasm. The enzyme catalyses a ribonucleoside 5'-phosphate + H2O = a ribonucleoside + phosphate. Nucleotidase that shows phosphatase activity on nucleoside 5'-monophosphates. This is 5'-nucleotidase SurE from Cereibacter sphaeroides (strain ATCC 17029 / ATH 2.4.9) (Rhodobacter sphaeroides).